Consider the following 71-residue polypeptide: Paralithocin 2 (71 aa).

The N-terminal stretch at 1–23 (MGAAKVLLVVLAVMVAVPNLAEG) is a signal peptide. 4 cysteine pairs are disulfide-bonded: C29–C58, C34–C54, C39–C52, and C44–C55. At R70 the chain carries Arginine amide; partial.

Belongs to the paralithocin family. The amidated form is probably the active form.

Has antibacterial activity, mainly against marine Gram-positive bacteria like C.maltaromaticum (MIC=50 uM), C.mobile (MIC=50 uM), C.divergens (MIC=50 uM) and C.funditum (MIC=25 uM) but also against C.glutamicum (MIC=12.5 uM). Has very little or no activity against Gram-negative bacteria. This chain is Paralithocin 2, found in Paralithodes camtschaticus (Red king crab).